The following is a 284-amino-acid chain: Putative cysteine-rich repeat secretory protein 7 (284 aa).

A signal peptide spans 1–24 (MARIILTAPLFYFFFSLLSHQTMS). Gnk2-homologous domains follow at residues 26–128 (PQHM…NVSF) and 134–244 (SKPV…TFVL). The tract at residues 247–284 (PAPSPSSLPPISPTSSPPLSLPPQLPPPLSQPPPPLST) is disordered.

It belongs to the cysteine-rich repeat secretory protein family.

It is found in the secreted. The chain is Putative cysteine-rich repeat secretory protein 7 (CRRSP7) from Arabidopsis thaliana (Mouse-ear cress).